A 288-amino-acid chain; its full sequence is NAD(P)H-hydrate epimerase (288 aa).

A mitochondrion-targeting transit peptide spans 1-48; the sequence is MSALRALLGLGLLAAGSRLRRVPGRAGACPAGSAWWEARRPHSGGGGE. The YjeF N-terminal domain maps to 65-275; it reads AQAVDEELFN…ALEKKYQLNL (211 aa). (6S)-NADPHX is bound at residue 119–123; it reads NNGGD. A K(+)-binding site is contributed by asparagine 120. Lysine 144 bears the N6-succinyllysine mark. Residue aspartate 185 coordinates K(+). (6S)-NADPHX is bound by residues 189–195 and aspartate 218; that span reads GFSFKGD. Residue serine 221 participates in K(+) binding.

It belongs to the NnrE/AIBP family. In terms of assembly, homodimer. Interacts with APOA1 and APOA2. K(+) is required as a cofactor. Undergoes physiological phosphorylation during sperm capacitation, downstream to PKA activation.

Its subcellular location is the mitochondrion. The protein localises to the secreted. It carries out the reaction (6R)-NADHX = (6S)-NADHX. It catalyses the reaction (6R)-NADPHX = (6S)-NADPHX. Catalyzes the epimerization of the S- and R-forms of NAD(P)HX, a damaged form of NAD(P)H that is a result of enzymatic or heat-dependent hydration. This is a prerequisite for the S-specific NAD(P)H-hydrate dehydratase to allow the repair of both epimers of NAD(P)HX. Accelerates cholesterol efflux from endothelial cells to high-density lipoprotein (HDL) and thereby regulates angiogenesis. This chain is NAD(P)H-hydrate epimerase, found in Canis lupus familiaris (Dog).